Reading from the N-terminus, the 500-residue chain is Probable cytosol aminopeptidase (500 aa).

Positions 265 and 270 each coordinate Mn(2+). The active site involves Lys277. Mn(2+) contacts are provided by Asp288, Asp347, and Glu349. Arg351 is an active-site residue.

The protein belongs to the peptidase M17 family. Requires Mn(2+) as cofactor.

It localises to the cytoplasm. It catalyses the reaction Release of an N-terminal amino acid, Xaa-|-Yaa-, in which Xaa is preferably Leu, but may be other amino acids including Pro although not Arg or Lys, and Yaa may be Pro. Amino acid amides and methyl esters are also readily hydrolyzed, but rates on arylamides are exceedingly low.. It carries out the reaction Release of an N-terminal amino acid, preferentially leucine, but not glutamic or aspartic acids.. Presumably involved in the processing and regular turnover of intracellular proteins. Catalyzes the removal of unsubstituted N-terminal amino acids from various peptides. This chain is Probable cytosol aminopeptidase, found in Rickettsia peacockii (strain Rustic).